We begin with the raw amino-acid sequence, 435 residues long: MNIVILGTQWGDEGKGKIVDMLTEDVAAVVRFQGGHNAGHTLIIDGEKTILRLIPSGILREGVLCLIGNGVVLSPPALMEEIEELNAKGIPVTEQLRISSACNLLLPYHVALDKAREAELGTKAIGTTGRGIGPAYEDKVARRGIRAMDLLHPDQLLEKIKKATAYHNIQLEHYYHQTPLDYQSIYNQLMEFREKIKPMIGDVSALLGNLRRQNKHIIFEGAQGSLLDIDLGTYPYVTSSNTTAGSAATGSGFGPLYFDRVLGITKAYVTRVGAGPFPTELTNEEGKKMAKRGNEFGSVTGRPRRCGWFDVISMRRTIQINSLTGIVLTKLDVLDEFAKIHLCTAYRCDGEVVNEPPFDQSLLESCEPVYEEMPGWQTSTYGLTDYSEMPKEARNYISRLEELLGVPITIISTGPDRKHTIVRQAVFNQVITAKG.

Residues 11–17 and 39–41 each bind GTP; these read GDEGKGK and GHT. Asp-12 acts as the Proton acceptor in catalysis. The Mg(2+) site is built by Asp-12 and Gly-39. IMP-binding positions include 12–15, 37–40, Thr-128, Arg-142, Gln-223, Thr-238, and Arg-302; these read DEGK and NAGH. His-40 functions as the Proton donor in the catalytic mechanism. 298-304 contributes to the substrate binding site; sequence SVTGRPR. GTP-binding positions include Arg-304, 330–332, and 412–414; these read KLD and STG.

The protein belongs to the adenylosuccinate synthetase family. In terms of assembly, homodimer. Mg(2+) is required as a cofactor.

It is found in the cytoplasm. It carries out the reaction IMP + L-aspartate + GTP = N(6)-(1,2-dicarboxyethyl)-AMP + GDP + phosphate + 2 H(+). It participates in purine metabolism; AMP biosynthesis via de novo pathway; AMP from IMP: step 1/2. Plays an important role in the de novo pathway of purine nucleotide biosynthesis. Catalyzes the first committed step in the biosynthesis of AMP from IMP. This Coxiella burnetii (strain RSA 493 / Nine Mile phase I) protein is Adenylosuccinate synthetase.